A 1288-amino-acid chain; its full sequence is MNSVRQSCRPKHQVLILKCYPRFQKGVQSVKPNSSELSYLLYYASTRRSKLQKVGAFLEKRAARDVWRGKLGNVQVTLQILAALIEKVPRDLPLYARSILTVLDIVLRSREISMVEETIPTFELFCRHQDSATLTADHEYIIQYRELVGTYASFASTETPVTTKTPMSAPMALRWRTVGLKAIKSIVTSEILSTDGAKQLNVVIPVILQNLYASGDHRLSPLQEKAKSSERLEREQFRRRRMSISTVQTVDTIDGNGDPESASGSAADADMMAEMEARVLALRCLEKVFSGTNRVQIRFATSLVLSFIVSRRPPRTQEKQRSANGKTDGNWATNLLEVIANWSPVQDRFIILVTLLETLVERPLVDGQLEPQLTLASMMDWLLGSSVNLIGLSVMDVLIGLLQFVRQLLQLGNGTQTLVPHHGLSTLIKPLPQMDETAATNSQTNGENEKAPTADSLRHELLELLENCIGNLATHVYYGDQVSDMIRTIVIRIKPSPALEGENAHHESESDNAIQKSSPSRSDYTAESYFSSSAARITALRSVKDILVVANLRKSTSGTDPDARNRVPLHVWEGTHWLLQDPQWEVRNAYVDAFLSWLQLETKKSDLRVPTEHTRVSKMGNRRDTSDIPERLARRIVSTAPQEENVAACHASSFLQLLHLTIFDVVSESSTTESDILRLYLLLVNLVEHLGVNAARYTLPVLMKLQDTLPSSVSASKALHIGSLVHGYLLALVEKFDLEGTRPAAEIINEISKRKKRGVWLDKIQLPPRPLHHIQPSLDTVIEQASLPQPDKNIYSRFTSLEELVRQIESTYNSSYVSPPISPSNSPGRSFSIPSLGLNNSTNPHVPAGSQLPLHVKEHMLAPWSKEACLDAIEKEKAKTSSLSGSRTATGAFAAGLNALNMSAYNSGPGSPTGTAPSASNRQDRPVSAAYAPTGNLAGFQKTRRQSIPERRVSPAASSRDSTVRVNELRRVLSVINSSNVRHPSPLRGRHRVDSTVSSTESMVSDNLSFSDAGTAAADRPLSSRENLTAPRGLNRYHGGPNQLHGDFEPEYIPPVPPLPSSLAIPGGFPADSRSGSSVTSPSHSPPRSDRPSTAPGRPARTHSKSKGSNASTLRQSRSLSRKKSLDTSLHERSERRATDLNGIPSGHSHGYSEDLGDIGIAITADTTEIAPHTQDRADTSSQWSRREASRTLSFGRRVDMDKLLEGLSAPNDDQQPNGTGEVSGIKIASSGVEGSSSLTRMGKKPSFQSMNDEKKASYSRKTSLLSPGAAPWNRLSSDRGGIGPPPY.

Disordered regions lie at residues 500-522 (EGENAHHESESDNAIQKSSPSRS), 816-835 (YVSPPISPSNSPGRSFSIPS), 906-964 (NSGP…DSTV), 980-1155 (NVRH…YSED), 1167-1195 (TTEIAPHTQDRADTSSQWSRREASRTLSF), and 1208-1288 (LSAP…PPPY). Residues 511-522 (DNAIQKSSPSRS) are compositionally biased toward polar residues. 2 stretches are compositionally biased toward polar residues: residues 906-921 (NSGPGSPTGTAPSASN) and 995-1012 (STVSSTESMVSDNLSFSD). Over residues 1073 to 1083 (SRSGSSVTSPS) the composition is skewed to low complexity. Basic and acidic residues-rich tracts occupy residues 1124 to 1139 (KSLDTSLHERSERRAT) and 1174 to 1190 (TQDRADTSSQWSRREAS). Positions 1212 to 1221 (NDDQQPNGTG) are enriched in polar residues.

The protein belongs to the EFR3 family.

This Coccidioides immitis (strain RS) (Valley fever fungus) protein is Protein EFR3 (EFR3).